A 252-amino-acid chain; its full sequence is Mitochondrial cardiolipin hydrolase (252 aa).

Topologically, residues 1-4 (MGRL) are mitochondrial intermembrane. The interval 1-39 (MGRLSWQVAAAAAVGLALTLEALPWVLRWLRSRRRRPRR) is required for mitochondrial localization. Residues 5–27 (SWQVAAAAAVGLALTLEALPWVL) traverse the membrane as a helical segment. The Cytoplasmic portion of the chain corresponds to 28–252 (RWLRSRRRRP…TCGTSSESQT (225 aa)). Residues 45–78 (PSQVTCTEALLRAPGAELAELPEGCPCGLPHGES) form a C3H1-type; atypical zinc finger. In terms of domain architecture, PLD phosphodiesterase spans 151-178 (DPGYMHHKFAIVDKRVLITGSLNWTTQA). Residues His-156, Lys-158, and Asp-163 contribute to the active site.

It belongs to the phospholipase D family. MitoPLD/Zucchini subfamily. In terms of assembly, homodimer. Interacts with MOV10L1. Interacts with MIGA1 and MIGA2; possibly facilitating homodimer formation. Interacts with GK2. In terms of tissue distribution, predominantly expressed in testis and ovary, but not limited to gonads (at protein level). It is also found in brain, heart, pituitary gland, prostate, pancreas, thyroid, bone marrow, lung and muscle.

It is found in the mitochondrion outer membrane. The protein resides in the golgi apparatus. It catalyses the reaction a cardiolipin + H2O = a 1,2-diacyl-sn-glycero-3-phospho-(1'-sn-glycerol) + a 1,2-diacyl-sn-glycero-3-phosphate + H(+). Its activity is regulated as follows. MYC stimulates its phospholipase activity. MIGA1 and MIGA2 increase PLD6 self-association affinity and affects the homodimer conformation facilitating its phospholipase activity over the nuclease activity. Single stranded DNA (ssDNA) hydrolase activity does not depend upon, but is stimulated by the presence of Ca(2+) and Mn(2+). Presents phospholipase and nuclease activities, depending on the different physiological conditions. Interaction with Mitoguardin (MIGA1 or MIGA2) affects the dimer conformation, facilitating the lipase activity over the nuclease activity. Plays a key role in mitochondrial fusion and fission via its phospholipase activity. In its phospholipase role, it uses the mitochondrial lipid cardiolipin as substrate to generate phosphatidate (PA or 1,2-diacyl-sn-glycero-3-phosphate), a second messenger signaling lipid. Production of PA facilitates Mitofusin-mediated fusion, whereas the cleavage of PA by the Lipin family of phosphatases produces diacylgycerol (DAG) which promotes mitochondrial fission. Both Lipin and DAG regulate mitochondrial dynamics and membrane fusion/fission, important processes for adapting mitochondrial metabolism to changes in cell physiology. Mitochondrial fusion enables cells to cope with the increased nucleotide demand during DNA synthesis. Mitochondrial function and dynamics are closely associated with biological processes such as cell growth, proliferation, and differentiation. Mediator of MYC activity, promotes mitochondrial fusion and activates AMPK which in turn inhibits YAP/TAZ, thereby inducing cell growth and proliferation. The endonuclease activity plays a critical role in PIWI-interacting RNA (piRNA) biogenesis during spermatogenesis. Implicated in spermatogenesis and sperm fertility in testicular germ cells, its single strand-specific nuclease activity is critical for the biogenesis/maturation of PIWI-interacting RNA (piRNA). MOV10L1 selectively binds to piRNA precursors and funnels them to the endonuclease that catalyzes the first cleavage step of piRNA processing to generate piRNA intermediate fragments that are subsequently loaded to Piwi proteins. Cleaves either DNA or RNA substrates with similar affinity, producing a 5' phosphate end, in this way it participates in the processing of primary piRNA transcripts. piRNAs provide essential protection against the activity of mobile genetic elements. piRNA-mediated transposon silencing is thus critical for maintaining genome stability, in particular in germline cells when transposons are mobilized as a consequence of wide-spread genomic demethylation. PA may act as signaling molecule in the recognition/transport of the precursor RNAs of primary piRNAs. Interacts with tesmin in testes, suggesting a role in spermatogenesis via association with its interacting partner. The protein is Mitochondrial cardiolipin hydrolase (PLD6) of Homo sapiens (Human).